Reading from the N-terminus, the 110-residue chain is Phosphoribosyl-ATP pyrophosphatase (110 aa).

Belongs to the PRA-PH family.

The protein resides in the cytoplasm. The enzyme catalyses 1-(5-phospho-beta-D-ribosyl)-ATP + H2O = 1-(5-phospho-beta-D-ribosyl)-5'-AMP + diphosphate + H(+). Its pathway is amino-acid biosynthesis; L-histidine biosynthesis; L-histidine from 5-phospho-alpha-D-ribose 1-diphosphate: step 2/9. This chain is Phosphoribosyl-ATP pyrophosphatase, found in Pseudomonas fluorescens (strain Pf0-1).